Reading from the N-terminus, the 414-residue chain is Phospholipid-transporting ATPase accessory subunit LEM3 (414 aa).

Positions 1-50 (MVNFDLGQVGEVFRRKDKGAIVSGDNPEEEEDVDASEFEEDEVKPVRTKN) are required for localization to the plasma membrane. Over 1–74 (MVNFDLGQVG…AINPVLTPRT (74 aa)) the chain is Cytoplasmic. The segment at 20–52 (AIVSGDNPEEEEDVDASEFEEDEVKPVRTKNRR) is disordered. Residues 26 to 42 (NPEEEEDVDASEFEEDE) show a composition bias toward acidic residues. Position 36 is a phosphoserine (serine 36). The chain crosses the membrane as a helical span at residues 75–95 (VLPLYLLIAVVFVIVGGCILA). The Extracellular portion of the chain corresponds to 96–372 (QNSKVDEVTI…HGSHLGGRNP (277 aa)). 2 cysteine pairs are disulfide-bonded: cysteine 110/cysteine 159 and cysteine 216/cysteine 231. Asparagine 113 is a glycosylation site (N-linked (GlcNAc...) asparagine). N-linked (GlcNAc...) asparagine glycosylation is found at asparagine 240, asparagine 256, asparagine 279, asparagine 298, and asparagine 332. The helical transmembrane segment at 373–393 (FLGIVYLIGGCICAAMALILL) threads the bilayer. Topologically, residues 394-414 (TFWLFGGRKIADASSLSWNMK) are cytoplasmic. The required for localization to the plasma membrane stretch occupies residues 400-414 (GRKIADASSLSWNMK).

It belongs to the CDC50/LEM3 family. As to quaternary structure, component of a flippase complex consisting of DNF1 or DNF2 and LEM3. Interacts with DNF1; the interaction is direct and required for their mutual export from the endoplasmic reticulum. Interacts with DNF2; the interaction is direct and required for their mutual export from the endoplasmic reticulum.

Its subcellular location is the cell membrane. In terms of biological role, accessory component of a P4-ATPase flippase complex which catalyzes the hydrolysis of ATP coupled to the transport of glucosylceramide, phosphatidylcholine, phosphatidylethanolamine, and small amounts of phosphatidylserine from the lumenal to the cytosolic leaflet of the cell membrane and ensures the maintenance of asymmetric distribution of phospholipids. Contributes to substrate binding and specificity of the P4-ATPase catalytic subunit. This Saccharomyces cerevisiae (strain ATCC 204508 / S288c) (Baker's yeast) protein is Phospholipid-transporting ATPase accessory subunit LEM3.